The primary structure comprises 43 residues: Metallothionein-3 (43 aa).

Belongs to the metallothionein superfamily. Type 5 family.

Functionally, this protein binds cations of several transition elements. Thought to be involved in metal ion homeostasis. This chain is Metallothionein-3 (MtnC), found in Drosophila melanogaster (Fruit fly).